Consider the following 126-residue polypeptide: Fluoride-specific ion channel FluC (126 aa).

Transmembrane regions (helical) follow at residues 3-23 (PLGF…RWGL), 36-56 (YGTL…VGFF), 68-88 (LLAI…SSEA), and 99-119 (WALL…ALGL). The Na(+) site is built by Gly76 and Thr79.

The protein belongs to the fluoride channel Fluc/FEX (TC 1.A.43) family.

It is found in the cell inner membrane. The enzyme catalyses fluoride(in) = fluoride(out). Its activity is regulated as follows. Na(+) is not transported, but it plays an essential structural role and its presence is essential for fluoride channel function. Its function is as follows. Fluoride-specific ion channel. Important for reducing fluoride concentration in the cell, thus reducing its toxicity. The protein is Fluoride-specific ion channel FluC of Cupriavidus pinatubonensis (strain JMP 134 / LMG 1197) (Cupriavidus necator (strain JMP 134)).